The primary structure comprises 315 residues: Ribosomal protein L11 methyltransferase (315 aa).

S-adenosyl-L-methionine is bound by residues threonine 163, glycine 185, aspartate 207, and asparagine 249.

Belongs to the methyltransferase superfamily. PrmA family.

It localises to the cytoplasm. It carries out the reaction L-lysyl-[protein] + 3 S-adenosyl-L-methionine = N(6),N(6),N(6)-trimethyl-L-lysyl-[protein] + 3 S-adenosyl-L-homocysteine + 3 H(+). In terms of biological role, methylates ribosomal protein L11. This is Ribosomal protein L11 methyltransferase from Lactobacillus helveticus (strain DPC 4571).